The following is a 287-amino-acid chain: Phospholipid phosphatase 2 (287 aa).

The Cytoplasmic portion of the chain corresponds to 1 to 4 (MERR). The helical transmembrane segment at 5-25 (WVFVLLDVLCVLVAALPCAIL) threads the bilayer. At 26-51 (TFVNTPYKRGFYCGDDSIRYPYRPDT) the chain is on the lumenal side. The helical transmembrane segment at 52-72 (ITHGLMAGVIITATVILVSAG) threads the bilayer. Topologically, residues 73–87 (EAYLVYTDRLYSRSD) are cytoplasmic. A helical membrane pass occupies residues 88 to 108 (FNNYLAALYKVVGTFLFGAAV). The Lumenal portion of the chain corresponds to 109-161 (SQSLTDLAKYMTGRLRPNFLAVCDPDWSRVNCSAYVQVEVCRGSSANVTESRL). The interval 117-125 (KYMTGRLRP) is phosphatase sequence motif I. N139 and N155 each carry an N-linked (GlcNAc...) asparagine glycan. Residues 162 to 182 (SFYSGHSSFGMYCMVFLALYV) traverse the membrane as a helical segment. Residues 164–167 (YSGH) form a phosphatase sequence motif II region. H167 serves as the catalytic Proton donors. Topologically, residues 183 to 193 (QARLCWKWARL) are cytoplasmic. A helical membrane pass occupies residues 194-211 (LRPTVQFFLVAFALYVGY). The Lumenal portion of the chain corresponds to 212–218 (TRVSDHK). The tract at residues 212–223 (TRVSDHKHHWSD) is phosphatase sequence motif III. Residue H219 is the Nucleophile of the active site. The helical transmembrane segment at 219-239 (HHWSDVLVGLLQGALVASLTV) threads the bilayer. Over 240–287 (RYISDFFKARPPQHCPEEEDLERKPSLSLTLALGETDCNHYGYPVSSS) the chain is Cytoplasmic.

The protein belongs to the PA-phosphatase related phosphoesterase family. In terms of assembly, forms functional homodimers and homooligomers. Can also form heterooligomers with PLPP1 and PLPP3. Post-translationally, N-glycosylated.

Its subcellular location is the membrane. It is found in the cell membrane. The protein resides in the early endosome membrane. It localises to the endoplasmic reticulum membrane. It catalyses the reaction a 1,2-diacyl-sn-glycero-3-phosphate + H2O = a 1,2-diacyl-sn-glycerol + phosphate. The catalysed reaction is 1,2-dihexadecanoyl-sn-glycero-3-phosphate + H2O = 1,2-dihexadecanoyl-sn-glycerol + phosphate. The enzyme catalyses 1,2-di-(9Z-octadecenoyl)-sn-glycero-3-phosphate + H2O = 1,2-di-(9Z-octadecenoyl)-sn-glycerol + phosphate. It carries out the reaction a monoacyl-sn-glycero-3-phosphate + H2O = a monoacylglycerol + phosphate. It catalyses the reaction (9Z)-octadecenoyl-sn-glycero-3-phosphate + H2O = (9Z-octadecenoyl)-glycerol + phosphate. The catalysed reaction is sphing-4-enine 1-phosphate + H2O = sphing-4-enine + phosphate. The enzyme catalyses an N-acylsphing-4-enine 1-phosphate + H2O = an N-acylsphing-4-enine + phosphate. It carries out the reaction N-(octanoyl)-sphing-4-enine-1-phosphate + H2O = N-octanoylsphing-4-enine + phosphate. It catalyses the reaction N-(9Z-octadecenoyl)-ethanolamine phosphate + H2O = N-(9Z-octadecenoyl) ethanolamine + phosphate. Its pathway is lipid metabolism; phospholipid metabolism. With respect to regulation, magnesium-independent phospholipid phosphatase. Insensitive to N-ethylmaleimide. Its function is as follows. Magnesium-independent phospholipid phosphatase that catalyzes the dephosphorylation of a variety of glycerolipid and sphingolipid phosphate esters including phosphatidate/PA, lysophosphatidate/LPA, sphingosine 1-phosphate/S1P and ceramide 1-phosphate/C1P. Has no apparent extracellular phosphatase activity and therefore most probably acts intracellularly. Also acts on N-oleoyl ethanolamine phosphate/N-(9Z-octadecenoyl)-ethanolamine phosphate, a potential physiological compound. Through dephosphorylation of these bioactive lipid mediators produces new bioactive compounds and may regulate signal transduction in different cellular processes. Indirectly regulates, for instance, cell cycle G1/S phase transition through its phospholipid phosphatase activity. This is Phospholipid phosphatase 2 from Bos taurus (Bovine).